We begin with the raw amino-acid sequence, 335 residues long: Glycerol-3-phosphate dehydrogenase [NAD(P)+] (335 aa).

Residues F11, R31, and K107 each contribute to the NADPH site. Residues K107 and G135 each contribute to the sn-glycerol 3-phosphate site. Residue A139 participates in NADPH binding. 5 residues coordinate sn-glycerol 3-phosphate: K190, D245, S255, R256, and N257. The active-site Proton acceptor is K190. Position 256 (R256) interacts with NADPH. The NADPH site is built by L280 and E282.

Belongs to the NAD-dependent glycerol-3-phosphate dehydrogenase family.

The protein resides in the cytoplasm. The enzyme catalyses sn-glycerol 3-phosphate + NAD(+) = dihydroxyacetone phosphate + NADH + H(+). The catalysed reaction is sn-glycerol 3-phosphate + NADP(+) = dihydroxyacetone phosphate + NADPH + H(+). It participates in membrane lipid metabolism; glycerophospholipid metabolism. Catalyzes the reduction of the glycolytic intermediate dihydroxyacetone phosphate (DHAP) to sn-glycerol 3-phosphate (G3P), the key precursor for phospholipid synthesis. The sequence is that of Glycerol-3-phosphate dehydrogenase [NAD(P)+] from Anaplasma marginale (strain St. Maries).